We begin with the raw amino-acid sequence, 267 residues long: MSDILDKILAVKADEVSAARKKRDLPSLRAEAESLRNEAGFAPRGFERSLRDKIAAGHAGVIAEVKKASPSKGVLRENFVPEAIAESYASHGAACLSVLTDVNFFQGHADYLKRARGACPLPALRKDFMVDLYQVYEARSWGADCILLIVAALDPGLMADLEACAHELGMDVLVEVHGADELDSALRLKTPLLGVNNRNLRTFEVSLDNTLDLLPSMPADRLVVTESGILGPNDVKRMRDADVHAFLVGEAFMRAKDPGVELARLFA.

The protein belongs to the TrpC family.

It carries out the reaction 1-(2-carboxyphenylamino)-1-deoxy-D-ribulose 5-phosphate + H(+) = (1S,2R)-1-C-(indol-3-yl)glycerol 3-phosphate + CO2 + H2O. The protein operates within amino-acid biosynthesis; L-tryptophan biosynthesis; L-tryptophan from chorismate: step 4/5. The polypeptide is Indole-3-glycerol phosphate synthase (Cupriavidus pinatubonensis (strain JMP 134 / LMG 1197) (Cupriavidus necator (strain JMP 134))).